The primary structure comprises 291 residues: ATP synthase gamma chain (291 aa).

The protein belongs to the ATPase gamma chain family. F-type ATPases have 2 components, CF(1) - the catalytic core - and CF(0) - the membrane proton channel. CF(1) has five subunits: alpha(3), beta(3), gamma(1), delta(1), epsilon(1). CF(0) has three main subunits: a, b and c.

Its subcellular location is the cell inner membrane. In terms of biological role, produces ATP from ADP in the presence of a proton gradient across the membrane. The gamma chain is believed to be important in regulating ATPase activity and the flow of protons through the CF(0) complex. This is ATP synthase gamma chain from Cupriavidus pinatubonensis (strain JMP 134 / LMG 1197) (Cupriavidus necator (strain JMP 134)).